Consider the following 289-residue polypeptide: ATP synthase gamma chain (289 aa).

The protein belongs to the ATPase gamma chain family. F-type ATPases have 2 components, CF(1) - the catalytic core - and CF(0) - the membrane proton channel. CF(1) has five subunits: alpha(3), beta(3), gamma(1), delta(1), epsilon(1). CF(0) has three main subunits: a, b and c.

The protein localises to the cell membrane. In terms of biological role, produces ATP from ADP in the presence of a proton gradient across the membrane. The gamma chain is believed to be important in regulating ATPase activity and the flow of protons through the CF(0) complex. In Mycoplasmoides gallisepticum (strain R(low / passage 15 / clone 2)) (Mycoplasma gallisepticum), this protein is ATP synthase gamma chain.